The sequence spans 196 residues: MSLPLVLGSSSPRRKFILEKFRVPFTVIPSNFDESKVSYSGDPIAYTQELAAQKAYAVSELHSPCDCIILTGDTIVSYDGRIFTKPQDKADAIQMLKTLRNQTHDVVTSIAVLHKGKLLTGSETSQISLTMIPDHRIESYIDTVGTLNNCGAYDVCHGGLILKKVHGCVYNVQGLPIQTLKYLLEELNIDLWDYSI.

The active-site Proton acceptor is the Asp73.

This sequence belongs to the Maf family. It depends on a divalent metal cation as a cofactor.

It is found in the cytoplasm. It carries out the reaction a ribonucleoside 5'-triphosphate + H2O = a ribonucleoside 5'-phosphate + diphosphate + H(+). The catalysed reaction is a 2'-deoxyribonucleoside 5'-triphosphate + H2O = a 2'-deoxyribonucleoside 5'-phosphate + diphosphate + H(+). In terms of biological role, nucleoside triphosphate pyrophosphatase. May have a dual role in cell division arrest and in preventing the incorporation of modified nucleotides into cellular nucleic acids. This Chlamydia pneumoniae (Chlamydophila pneumoniae) protein is Nucleoside triphosphate pyrophosphatase.